We begin with the raw amino-acid sequence, 547 residues long: CAP-Gly domain-containing linker protein 3 (547 aa).

A disordered region spans residues 1-49; sequence MTKTDPAPMAPPPRGEEEEEEEEDEPVPEAPSPTQERRQKPVVHPSAPA. Acidic residues predominate over residues 16–27; that stretch reads EEEEEEEEDEPV. ANK repeat units follow at residues 117 to 155, 160 to 189, and 197 to 226; these read TDMTLLHYACKAGAHGVGDPAAAVRLSQQLLALGADVTL, TNMNALHYAAYFDVPDLVRVLLKGARPRVV, and NHGSALHIAASSLCLGAAKCLLEHGANPAL. One can recognise a CAP-Gly 1 domain in the interval 314–356; it reads GTTEFASGQWVGVELDEPEGKNDGSVGGVRYFICPPKQGLFAS. The tract at residues 365–413 is disordered; that stretch reads DAPPSSVTSTPRTPRMDFSRVTGKGRREHKGKKKTPSSPSLGSLQQRDR. The segment covering 367–377 has biased composition (low complexity); that stretch reads PPSSVTSTPRT. Residue Thr374 is modified to Phosphothreonine. A compositionally biased stretch (basic residues) spans 387-399; that stretch reads GKGRREHKGKKKT. The span at 400–409 shows a compositional bias: polar residues; it reads PSSPSLGSLQ. Residue Ser401 is modified to Phosphoserine. The region spanning 436-478 is the CAP-Gly 2 domain; sequence GKTDFAPGYWYGIELDQPTGKHDGSVFGVRYFTCPPRHGVFAP. Positions 488 to 547 are goLD; it reads STDSPGDSVGAKKVHQVTMTQPKRTFTTVRTPKDIASENSISRLLFCCWFPWMLRAEMQS. 2 S-palmitoyl cysteine lipidation sites follow: Cys534 and Cys535.

In terms of assembly, homodimer. Interacts with AKT1 and AKT2; when AKT1 and AKT2 are phosphorylated and activated, affinity is higher for AKT2. Interacts with ZDHHC13 (via ANK repeats). Interacts with ZDHHC17 (via ANK repeats). Post-translationally, palmitoylation by ZDHHC17 regulates association with the plasma membrane.

The protein localises to the cell membrane. The protein resides in the cytoplasm. Its subcellular location is the golgi apparatus. It is found in the golgi stack. In terms of biological role, functions as a cytoplasmic linker protein. Involved in TGN-endosome dynamics. May modulate the cellular compartmentalization of AKT kinase family and promote its cell membrane localization, thereby playing a role in glucose transport in adipocytes. This is CAP-Gly domain-containing linker protein 3 (CLIP3) from Pongo abelii (Sumatran orangutan).